A 460-amino-acid polypeptide reads, in one-letter code: Light-independent protochlorophyllide reductase subunit N (460 aa).

Residues Cys-20, Cys-45, and Cys-105 each coordinate [4Fe-4S] cluster.

The protein belongs to the BchN/ChlN family. In terms of assembly, protochlorophyllide reductase is composed of three subunits; ChlL, ChlN and ChlB. Forms a heterotetramer of two ChlB and two ChlN subunits. [4Fe-4S] cluster serves as cofactor.

The protein resides in the plastid. It localises to the chloroplast. The catalysed reaction is chlorophyllide a + oxidized 2[4Fe-4S]-[ferredoxin] + 2 ADP + 2 phosphate = protochlorophyllide a + reduced 2[4Fe-4S]-[ferredoxin] + 2 ATP + 2 H2O. It participates in porphyrin-containing compound metabolism; chlorophyll biosynthesis (light-independent). In terms of biological role, component of the dark-operative protochlorophyllide reductase (DPOR) that uses Mg-ATP and reduced ferredoxin to reduce ring D of protochlorophyllide (Pchlide) to form chlorophyllide a (Chlide). This reaction is light-independent. The NB-protein (ChlN-ChlB) is the catalytic component of the complex. This Adiantum capillus-veneris (Maidenhair fern) protein is Light-independent protochlorophyllide reductase subunit N.